Reading from the N-terminus, the 453-residue chain is Citrate (Re)-synthase (453 aa).

Residues 46-316 (IYITDTTFRD…TKNMKLHVIT (271 aa)) form the Pyruvate carboxyltransferase domain.

It belongs to the alpha-IPM synthase/homocitrate synthase family. It depends on Mn(2+) as a cofactor. Co(2+) serves as cofactor. Mg(2+) is required as a cofactor.

It carries out the reaction oxaloacetate + acetyl-CoA + H2O = citrate + CoA + H(+). Inhibited by p-chloromercuribenzoate (pCMB), EDTA, Zn(2+) ions, and under aerobic conditions. In terms of biological role, catalyzes the condensation of the acetyl group of acetyl-CoA with oxaloacetate to form citrate. This enzyme is highly Re-face stereospecific with respect to the C-2 of oxaloacetate. This chain is Citrate (Re)-synthase, found in Clostridium kluyveri (strain ATCC 8527 / DSM 555 / NBRC 12016 / NCIMB 10680 / K1).